The primary structure comprises 314 residues: Ribosomal RNA small subunit methyltransferase H (314 aa).

Residues 37–39 (GSH), aspartate 57, phenylalanine 84, aspartate 105, and glutamine 112 each bind S-adenosyl-L-methionine.

The protein belongs to the methyltransferase superfamily. RsmH family.

The protein localises to the cytoplasm. The catalysed reaction is cytidine(1402) in 16S rRNA + S-adenosyl-L-methionine = N(4)-methylcytidine(1402) in 16S rRNA + S-adenosyl-L-homocysteine + H(+). Specifically methylates the N4 position of cytidine in position 1402 (C1402) of 16S rRNA. The chain is Ribosomal RNA small subunit methyltransferase H from Fusobacterium nucleatum subsp. nucleatum (strain ATCC 25586 / DSM 15643 / BCRC 10681 / CIP 101130 / JCM 8532 / KCTC 2640 / LMG 13131 / VPI 4355).